The following is a 215-amino-acid chain: Cytochrome b6 (215 aa).

A helical membrane pass occupies residues 32–52; the sequence is IFYCLGGITLTCFIVQVATGF. Heme c is bound at residue Cys35. Residues His86 and His100 each contribute to the heme b site. 3 consecutive transmembrane segments (helical) span residues 90–110, 116–136, and 186–206; these read ASMMVLMMILHVFRVYLTGGF, LTWITGVVLAVLTVSFGVTGY, and LHTFVLPLLTAVFMLMHFLMI. Residues His187 and His202 each contribute to the heme b site.

It belongs to the cytochrome b family. PetB subfamily. The 4 large subunits of the cytochrome b6-f complex are cytochrome b6, subunit IV (17 kDa polypeptide, PetD), cytochrome f and the Rieske protein, while the 4 small subunits are PetG, PetL, PetM and PetN. The complex functions as a dimer. The cofactor is heme b. Heme c is required as a cofactor.

It is found in the plastid. Its subcellular location is the chloroplast thylakoid membrane. Functionally, component of the cytochrome b6-f complex, which mediates electron transfer between photosystem II (PSII) and photosystem I (PSI), cyclic electron flow around PSI, and state transitions. The polypeptide is Cytochrome b6 (Chara vulgaris (Common stonewort)).